The following is a 999-amino-acid chain: Testis anion transporter 1 (999 aa).

The Cytoplasmic segment spans residues 1–93; it reads MQTERSLQSF…YRFKDWLLGD (93 aa). The helical transmembrane segment at 94–114 threads the bilayer; that stretch reads LLAGLSVGLVQVPQGLILSLL. Residues 115 to 117 are Extracellular-facing; sequence TRQ. The helical transmembrane segment at 118-138 threads the bilayer; that stretch reads LIPPLNVTYAAFCSSVIYVIF. Position 139 (Gly139) is a topological domain, cytoplasmic. The chain crosses the membrane as a helical span at residues 140-160; that stretch reads SCHQMSIGPFFLVSALMINVL. At 161–200 the chain is on the extracellular side; that stretch reads KDRPFNNGHLILGTFVKDDFSVPTFYLSYNRSLSMVASTT. Residue Asn190 is glycosylated (N-linked (GlcNAc...) asparagine). A helical transmembrane segment spans residues 201 to 221; sequence FLTGIIQLSMGMLGMGFMATY. At 222 to 230 the chain is on the cytoplasmic side; sequence LPEAATSAY. The chain crosses the membrane as a helical span at residues 231 to 251; sequence LAAVALHIILAQMTCILGIMV. The Extracellular portion of the chain corresponds to 252–268; the sequence is SFHAGPISFIYNIINYC. The helical transmembrane segment at 269–289 threads the bilayer; sequence IALPKANSTSILLFITSVVAL. At 290 to 305 the chain is on the cytoplasmic side; that stretch reads RINKCIRITFNRYPIE. Residues 306–326 form a helical membrane-spanning segment; that stretch reads FPMELLLILGFSLLTSKITMA. Over 327–354 the chain is Extracellular; it reads TENSKMLMNMIPYSFVFPENPEFGILSR. Residues 355-375 form a helical membrane-spanning segment; that stretch reads VVLQALSLSFVSSFLLISLGK. The Cytoplasmic segment spans residues 376-390; that stretch reads KIANFHNYRTNSNQD. A helical transmembrane segment spans residues 391–411; that stretch reads LIAIGLCNLLSSFFKCCVFTG. At 412–427 the chain is on the extracellular side; the sequence is SLSRTTIQDKSGGRQQ. Residues 428-448 form a helical membrane-spanning segment; sequence FASLVGAGVMLLLMVKMESFF. Over 449–453 the chain is Cytoplasmic; sequence HNLPN. A helical transmembrane segment spans residues 454-474; sequence AVLAGIILSNVVPYLEAIYNL. Topologically, residues 475–494 are extracellular; sequence PSLWRQDQYECIIWMVTFSS. Residues 495–515 form a helical membrane-spanning segment; it reads AILLGLDVGLLISLAFTFFVI. The Cytoplasmic segment spans residues 516-544; the sequence is TIRSHRTKILVLGQIPNTNIYRNVNDYRE. An STAS domain is found at 541–796; the sequence is DYREVILIPG…LSLHDAVLFA (256 aa). A helical membrane pass occupies residues 545 to 565; sequence VILIPGVKIFQCCSSITFVNV. The Extracellular segment spans residues 566-999; that stretch reads YHLKQKVLKE…RKPHNYPNSP (434 aa). The tract at residues 661-999 is interaction with RACGAP1; that stretch reads TVSSTSQRNI…RKPHNYPNSP (339 aa). Disordered stretches follow at residues 678–701 and 893–999; these read EKAW…SESL and SELD…PNSP. Residues 684–696 show a composition bias toward pro residues; it reads NSPPRNSPLPPPE. 2 stretches are compositionally biased toward acidic residues: residues 893 to 903 and 912 to 947; these read SELDPGSELDS and ELES…EPEP. A compositionally biased stretch (polar residues) spans 973 to 982; the sequence is GSSNSQSRAP.

This sequence belongs to the SLC26A/SulP transporter (TC 2.A.53) family. In terms of assembly, interacts with RACGAP1. Interacts with CFTR; stimulates anion transport activity of CFTR. Post-translationally, N-glycosylated. Expressed in testis and epididymis. Located at the end of the midpiece of the flagella, known as the annulus, in spermatozoa.

The protein localises to the membrane. It carries out the reaction sulfate(out) + chloride(in) = sulfate(in) + chloride(out). It catalyses the reaction oxalate(in) + chloride(out) = oxalate(out) + chloride(in). Its function is as follows. Antiporter that mediates the exchange of sulfate and oxalate against chloride ions across a membrane. Stimulates anion transport activity of CFTR. May cooperate with CFTR in the regulation of chloride and bicarbonate ions fluxes required for activation of the ADCY10/PKA pathway during sperm motility and sperm capacitation. May play a role in sperm tail differentiation and motility and hence male fertility. In Mus musculus (Mouse), this protein is Testis anion transporter 1.